We begin with the raw amino-acid sequence, 286 residues long: Pyridoxal kinase PdxY (286 aa).

Residues S9 and 44–45 (TQ) contribute to the substrate site. Residues D111, E148, and K181 each contribute to the ATP site. D222 serves as a coordination point for substrate.

It belongs to the pyridoxine kinase family. PdxY subfamily. Homodimer. Mg(2+) serves as cofactor.

The enzyme catalyses pyridoxal + ATP = pyridoxal 5'-phosphate + ADP + H(+). It participates in cofactor metabolism; pyridoxal 5'-phosphate salvage; pyridoxal 5'-phosphate from pyridoxal: step 1/1. Pyridoxal kinase involved in the salvage pathway of pyridoxal 5'-phosphate (PLP). Catalyzes the phosphorylation of pyridoxal to PLP. This chain is Pyridoxal kinase PdxY, found in Pasteurella multocida (strain Pm70).